Reading from the N-terminus, the 309-residue chain is Dicarboxylate carrier UCP2 (309 aa).

The Mitochondrial intermembrane portion of the chain corresponds to 1–16; it reads MVGFKATDVPPTATVK. Solcar repeat units follow at residues 11 to 106, 114 to 203, and 212 to 297; these read PTAT…VKQF, AGIG…IKDT, and DDLP…LKRA. The segment at 16 to 63 is important for interaction with long-chain fatty acids; it reads KFLGAGTAACIADLITFPLDTAKVRLQIQGESQGLVRTAASAQYRGVL. A helical transmembrane segment spans residues 17–40; it reads FLGAGTAACIADLITFPLDTAKVR. The Mitochondrial matrix portion of the chain corresponds to 41–77; the sequence is LQIQGESQGLVRTAASAQYRGVLGTILTMVRTEGPRS. A helical membrane pass occupies residues 78–103; the sequence is LYNGLVAGLQRQMSFASVRIGLYDSV. Residues 104–119 are Mitochondrial intermembrane-facing; the sequence is KQFYTKGSEHAGIGSR. Residues 120–145 form a helical membrane-spanning segment; that stretch reads LLAGSTTGALAVAVAQPTDVVKVRFQ. Residues 146-173 are Mitochondrial matrix-facing; it reads AQARAGGGRRYQSTVEAYKTIAREEGIR. A helical transmembrane segment spans residues 174–199; it reads GLWKGTSPNVARNAIVNCAELVTYDL. The Mitochondrial intermembrane portion of the chain corresponds to 200–217; it reads IKDTLLKANLMTDDLPCH. Residues 218–242 form a helical membrane-spanning segment; sequence FTSAFGAGFCTTVIASPVDVVKTRY. Residues 243 to 268 are Mitochondrial matrix-facing; the sequence is MNSALGQYHSAGHCALTMLRKEGPRA. A helical membrane pass occupies residues 269–294; the sequence is FYKGFMPSFLRLGSWNVVMFVTYEQL. The segment at 278–285 is important for interaction with long-chain fatty acids; that stretch reads LRLGSWNV. The Mitochondrial intermembrane segment spans residues 295–309; the sequence is KRALMAAYQSREAPF.

Belongs to the mitochondrial carrier (TC 2.A.29) family. In terms of assembly, homotetramer. Adopts an asymmetrical dimer of dimers functional form. Interacts with MICU1 (when methylated); leading to decrease the calcium sensitivity of MICU1. In terms of tissue distribution, widely expressed. Highest in spleen, lung, white and brown adipose tissues. 4-6 times higher levels are detected in white adipose tissue of ob/ob and db/db mice when compared to lean littermates. Expressed in neurons of the ventromedial nucleus of the hypothalamus (at protein level). Expressed in thymocytes (at protein level).

The protein localises to the mitochondrion inner membrane. It carries out the reaction L-aspartate(out) + phosphate(in) + H(+)(in) = L-aspartate(in) + phosphate(out) + H(+)(out). The catalysed reaction is oxaloacetate(out) + phosphate(in) + H(+)(in) = oxaloacetate(in) + phosphate(out) + H(+)(out). The enzyme catalyses (S)-malate(out) + phosphate(in) + H(+)(in) = (S)-malate(in) + phosphate(out) + H(+)(out). It catalyses the reaction malonate(out) + phosphate(in) + H(+)(in) = malonate(in) + phosphate(out) + H(+)(out). It carries out the reaction sulfate(out) + phosphate(in) + H(+)(in) = sulfate(in) + phosphate(out) + H(+)(out). The catalysed reaction is (S)-malate(out) = (S)-malate(in). The enzyme catalyses L-aspartate(out) = L-aspartate(in). It catalyses the reaction phosphate(in) = phosphate(out). It carries out the reaction chloride(in) = chloride(out). The catalysed reaction is H(+)(in) = H(+)(out). The enzyme catalyses a long-chain fatty acid(out) = a long-chain fatty acid(in). Its activity is regulated as follows. Proton conductance is activated by free long-chain fatty acids and allosterically inhibited by purine nucleotides. Could be constitutively inhibited by GDP. Its function is as follows. Antiporter that exports dicarboxylate intermediates of the Krebs cycle in exchange for phosphate plus a proton across the inner membrane of mitochondria, a process driven by mitochondrial motive force with an overall impact on glycolysis, glutaminolysis and glutathione-dependent redox balance. Continuous export of oxaloacetate and related four-carbon dicarboxylates from mitochondrial matrix into the cytosol negatively regulates the oxidation of acetyl-CoA substrates via the Krebs cycle lowering the ATP/ADP ratio and reactive oxygen species (ROS) production. May mediate inducible proton entry into the mitochondrial matrix affecting ATP turnover as a protection mechanism against oxidative stress. The proton currents are most likely associated with fatty acid flipping across the inner membrane of mitochondria in a metabolic process regulated by free fatty acids and purine nucleotides. Regulates the use of glucose as a source of energy. Required for glucose-induced DRP1-dependent mitochondrial fission and neuron activation in the ventromedial nucleus of the hypothalamus (VMH). This mitochondrial adaptation mechanism modulates the VMH pool of glucose-excited neurons with an impact on systemic glucose homeostasis. Regulates ROS levels and metabolic reprogramming of macrophages during the resolution phase of inflammation. Attenuates ROS production in response to IL33 to preserve the integrity of the Krebs cycle required for persistent production of itaconate and subsequent GATA3-dependent differentiation of inflammation-resolving alternatively activated macrophages. Can unidirectionally transport anions including L-malate, L-aspartate, phosphate and chloride ions. Does not mediate adaptive thermogenesis. The protein is Dicarboxylate carrier UCP2 (Ucp2) of Mus musculus (Mouse).